The primary structure comprises 400 residues: Poly(A) polymerase type 3 (400 aa).

ATP is bound by residues 97 to 99 (FGS), threonine 106, 110 to 112 (DID), aspartate 164, lysine 225, tyrosine 234, and 243 to 244 (GV). 3 residues coordinate Mg(2+): aspartate 110, aspartate 112, and aspartate 164. Positions 382 to 390 (GEIINKNKK) match the Nuclear localization signal motif.

It belongs to the poly(A) polymerase family. As to quaternary structure, monomer. The cofactor is Mg(2+). It depends on Mn(2+) as a cofactor.

It localises to the nucleus. It catalyses the reaction RNA(n) + ATP = RNA(n)-3'-adenine ribonucleotide + diphosphate. Its function is as follows. Polymerase that creates the 3'-poly(A) tail of mRNA's. May acquire specificity through interaction with a cleavage and polyadenylation factor (CPSF). In Xenopus laevis (African clawed frog), this protein is Poly(A) polymerase type 3.